The sequence spans 292 residues: Bis(5'-nucleosyl)-tetraphosphatase, symmetrical (292 aa).

This sequence belongs to the Ap4A hydrolase family.

It carries out the reaction P(1),P(4)-bis(5'-adenosyl) tetraphosphate + H2O = 2 ADP + 2 H(+). Functionally, hydrolyzes diadenosine 5',5'''-P1,P4-tetraphosphate to yield ADP. The chain is Bis(5'-nucleosyl)-tetraphosphatase, symmetrical from Yersinia enterocolitica serotype O:8 / biotype 1B (strain NCTC 13174 / 8081).